We begin with the raw amino-acid sequence, 224 residues long: UPF0111 protein TC_0063 (224 aa).

The protein belongs to the UPF0111 family.

This Chlamydia muridarum (strain MoPn / Nigg) protein is UPF0111 protein TC_0063.